We begin with the raw amino-acid sequence, 113 residues long: Immunoglobulin lambda variable 2-23 (113 aa).

An N-terminal signal peptide occupies residues 1–19 (MAWALLLLTLLTQDTGSWA). Pyrrolidone carboxylic acid is present on Q20. Residues 20–44 (QSALTQPASVSGSPGQSITISCTGT) are framework-1. An Ig-like domain is found at 20 to 113 (QSALTQPASV…EADYYCCSYA (94 aa)). A disulfide bridge connects residues C41 and C109. Residues 45–53 (SSDVGSYNL) are complementarity-determining-1. A framework-2 region spans residues 54-70 (VSWYQQHPGKAPKLMIY). The tract at residues 71 to 73 (EGS) is complementarity-determining-2. The segment at 73–92 (SKRPSGVSNRFSGSKSGNTA) is disordered. The tract at residues 74–109 (KRPSGVSNRFSGSKSGNTASLTISGLQAEDEADYYC) is framework-3. Polar residues predominate over residues 78–92 (GVSNRFSGSKSGNTA). Residues 110–113 (CSYA) form a complementarity-determining-3 region.

Immunoglobulins are composed of two identical heavy chains and two identical light chains; disulfide-linked.

It localises to the secreted. The protein resides in the cell membrane. In terms of biological role, v region of the variable domain of immunoglobulin light chains that participates in the antigen recognition. Immunoglobulins, also known as antibodies, are membrane-bound or secreted glycoproteins produced by B lymphocytes. In the recognition phase of humoral immunity, the membrane-bound immunoglobulins serve as receptors which, upon binding of a specific antigen, trigger the clonal expansion and differentiation of B lymphocytes into immunoglobulins-secreting plasma cells. Secreted immunoglobulins mediate the effector phase of humoral immunity, which results in the elimination of bound antigens. The antigen binding site is formed by the variable domain of one heavy chain, together with that of its associated light chain. Thus, each immunoglobulin has two antigen binding sites with remarkable affinity for a particular antigen. The variable domains are assembled by a process called V-(D)-J rearrangement and can then be subjected to somatic hypermutations which, after exposure to antigen and selection, allow affinity maturation for a particular antigen. This is Immunoglobulin lambda variable 2-23 from Homo sapiens (Human).